The primary structure comprises 147 residues: Small ribosomal subunit protein bS16 (147 aa).

The tract at residues 81–147 (QKFTGDTSPS…GDNSGEKAEA (67 aa)) is disordered. Basic and acidic residues-rich tracts occupy residues 95-104 (QPERPNKDDL) and 114-125 (EAPREAITKKSE). A compositionally biased stretch (low complexity) spans 126 to 140 (GAAADEASESAAGDN).

Belongs to the bacterial ribosomal protein bS16 family.

The polypeptide is Small ribosomal subunit protein bS16 (Cutibacterium acnes (strain DSM 16379 / KPA171202) (Propionibacterium acnes)).